We begin with the raw amino-acid sequence, 560 residues long: DNA ligase B (560 aa).

The active-site N6-AMP-lysine intermediate is the Lys124.

The protein belongs to the NAD-dependent DNA ligase family. LigB subfamily.

It catalyses the reaction NAD(+) + (deoxyribonucleotide)n-3'-hydroxyl + 5'-phospho-(deoxyribonucleotide)m = (deoxyribonucleotide)n+m + AMP + beta-nicotinamide D-nucleotide.. Functionally, catalyzes the formation of phosphodiester linkages between 5'-phosphoryl and 3'-hydroxyl groups in double-stranded DNA using NAD as a coenzyme and as the energy source for the reaction. This Escherichia coli O157:H7 protein is DNA ligase B.